We begin with the raw amino-acid sequence, 624 residues long: Polygalacturonase 1 beta-like protein 2 (624 aa).

A signal peptide spans 1–26 (MNNIEATLFLCFFCIFSSSNVHFAGA). An FXXY 1 repeat occupies 121-124 (FAAY). Asparagine 128 is a glycosylation site (N-linked (GlcNAc...) asparagine). 11 FXXY repeats span residues 129-132 (FTNY), 143-146 (FKNY), 157-160 (FRRY), 171-174 (FTNY), 185-188 (FTTY), 199-202 (FTNY), 213-216 (FTSY), 227-230 (FTTY), 241-244 (FTSY), 255-258 (FSGY), and 269-272 (FTKY). N-linked (GlcNAc...) asparagine glycosylation is present at asparagine 145. Positions 199–219 (FTNYNTDANEPNGRFTSYSDK) are disordered. A glycan (N-linked (GlcNAc...) asparagine) is linked at asparagine 280. FXXY repeat units follow at residues 283-286 (FTSY), 297-300 (FKGY), 311-314 (FKNY), 325-328 (FSSY), and 339-342 (FVNY). N-linked (GlcNAc...) asparagine glycosylation occurs at asparagine 352. One copy of the FXXY 18 repeat lies at 353–356 (FTGY). An N-linked (GlcNAc...) asparagine glycan is attached at asparagine 364. FXXY repeat units lie at residues 367–370 (FKTY), 376–379 (FKVY), and 386–389 (FARY). 2 N-linked (GlcNAc...) asparagine glycosylation sites follow: asparagine 392 and asparagine 463. Positions 409 to 623 (FFREAMLKEG…FENDMTWNII (215 aa)) constitute a BURP domain.

In terms of tissue distribution, expressed in flowers and stems.

It localises to the secreted. Its subcellular location is the extracellular space. The protein resides in the apoplast. The protein localises to the cell wall. In terms of biological role, involved in cell size determination. The polypeptide is Polygalacturonase 1 beta-like protein 2 (Arabidopsis thaliana (Mouse-ear cress)).